The primary structure comprises 143 residues: Putative pre-16S rRNA nuclease (143 aa).

The protein belongs to the YqgF nuclease family.

It is found in the cytoplasm. Functionally, could be a nuclease involved in processing of the 5'-end of pre-16S rRNA. This Lactobacillus johnsonii (strain CNCM I-12250 / La1 / NCC 533) protein is Putative pre-16S rRNA nuclease.